The chain runs to 78 residues: Large ribosomal subunit protein eL20 (78 aa).

This sequence belongs to the eukaryotic ribosomal protein eL20 family. As to quaternary structure, part of the 50S ribosomal subunit. Binds 23S rRNA.

The sequence is that of Large ribosomal subunit protein eL20 from Thermococcus sibiricus (strain DSM 12597 / MM 739).